A 545-amino-acid chain; its full sequence is Chaperonin GroEL (545 aa).

Residues 29–32 (TMGP), lysine 50, 86–90 (DGTTT), glycine 414, 477–479 (DAA), and aspartate 493 contribute to the ATP site.

This sequence belongs to the chaperonin (HSP60) family. In terms of assembly, forms a cylinder of 14 subunits composed of two heptameric rings stacked back-to-back. Interacts with the co-chaperonin GroES.

The protein localises to the cytoplasm. It catalyses the reaction ATP + H2O + a folded polypeptide = ADP + phosphate + an unfolded polypeptide.. Together with its co-chaperonin GroES, plays an essential role in assisting protein folding. The GroEL-GroES system forms a nano-cage that allows encapsulation of the non-native substrate proteins and provides a physical environment optimized to promote and accelerate protein folding. The polypeptide is Chaperonin GroEL (Campylobacter jejuni subsp. jejuni serotype O:2 (strain ATCC 700819 / NCTC 11168)).